The primary structure comprises 554 residues: Glutamine--tRNA ligase (554 aa).

The 'HIGH' region motif lies at 34 to 44 (PEPNGYLHIGH). Residues 35-37 (EPN) and 41-47 (HIGHAKS) each bind ATP. 2 residues coordinate L-glutamine: D67 and Y212. ATP-binding positions include T231, 261–262 (RL), and 269–271 (MSK). The short motif at 268-272 (VMSKR) is the 'KMSKS' region element.

It belongs to the class-I aminoacyl-tRNA synthetase family. In terms of assembly, monomer.

It localises to the cytoplasm. The catalysed reaction is tRNA(Gln) + L-glutamine + ATP = L-glutaminyl-tRNA(Gln) + AMP + diphosphate. This Shigella boydii serotype 4 (strain Sb227) protein is Glutamine--tRNA ligase.